The primary structure comprises 284 residues: RNase adapter protein RapZ (284 aa).

Position 8–15 (8–15) interacts with ATP; sequence GRSGSGKS. 56-59 serves as a coordination point for GTP; the sequence is DVRN. Residues 266–284 form an RNA-binding region; the sequence is RSRGKNVQSRHRTLEKRKP.

It belongs to the RapZ-like family. RapZ subfamily. As to quaternary structure, homotrimer.

In terms of biological role, modulates the synthesis of GlmS, by affecting the processing and stability of the regulatory small RNA GlmZ. When glucosamine-6-phosphate (GlcN6P) concentrations are high in the cell, RapZ binds GlmZ and targets it to cleavage by RNase E. Consequently, GlmZ is inactivated and unable to activate GlmS synthesis. Under low GlcN6P concentrations, RapZ is sequestered and inactivated by an other regulatory small RNA, GlmY, preventing GlmZ degradation and leading to synthesis of GlmS. In Shigella dysenteriae serotype 1 (strain Sd197), this protein is RNase adapter protein RapZ.